Here is a 294-residue protein sequence, read N- to C-terminus: Cytidine deaminase (294 aa).

CMP/dCMP-type deaminase domains lie at 48 to 168 (DEDA…FGPK) and 186 to 294 (LTGD…VLLA). 89-91 (NME) serves as a coordination point for substrate. His-102 contacts Zn(2+). Residue Glu-104 is the Proton donor of the active site. Zn(2+) is bound by residues Cys-129 and Cys-132.

This sequence belongs to the cytidine and deoxycytidylate deaminase family. In terms of assembly, homodimer. Requires Zn(2+) as cofactor.

It carries out the reaction cytidine + H2O + H(+) = uridine + NH4(+). The catalysed reaction is 2'-deoxycytidine + H2O + H(+) = 2'-deoxyuridine + NH4(+). Functionally, this enzyme scavenges exogenous and endogenous cytidine and 2'-deoxycytidine for UMP synthesis. This Escherichia coli O7:K1 (strain IAI39 / ExPEC) protein is Cytidine deaminase.